The chain runs to 323 residues: MPSLPPAIFLMGPTAAGKTDLAMALADALPCELISVDSALIYRGMDIGTAKPSRELLARYPHRLIDIRDPAESYSAAEFRADALAAMAEATARGRIPLLVGGTMLYYKALLEGLADMPGADPEVRAALEAEARAEGWEALHRQLAEVDPESAARIHPNDPQRLMRALEVYRVGGVSMSELRRRQSAEKADFDASGRNQLPYTVAQLAIAPEQRQVLHARIAQRFRQMLEQGFIAEVEALHARSDLHAGLPSIRAVGYRQVWDYLDGKLSYAEMTERGIIATRQLAKRQFTWLRSWSHLHWMDSLAGDNLPRALKYLKTVSILA.

12-19 is a binding site for ATP; it reads GPTAAGKT. 14 to 19 lines the substrate pocket; that stretch reads TAAGKT. Interaction with substrate tRNA regions lie at residues 37–40 and 161–165; these read DSAL and QRLMR.

The protein belongs to the IPP transferase family. In terms of assembly, monomer. The cofactor is Mg(2+).

It carries out the reaction adenosine(37) in tRNA + dimethylallyl diphosphate = N(6)-dimethylallyladenosine(37) in tRNA + diphosphate. Catalyzes the transfer of a dimethylallyl group onto the adenine at position 37 in tRNAs that read codons beginning with uridine, leading to the formation of N6-(dimethylallyl)adenosine (i(6)A). The chain is tRNA dimethylallyltransferase from Pseudomonas paraeruginosa (strain DSM 24068 / PA7) (Pseudomonas aeruginosa (strain PA7)).